A 78-amino-acid chain; its full sequence is Small ribosomal subunit protein uS15c (78 aa).

It belongs to the universal ribosomal protein uS15 family. In terms of assembly, part of the 30S ribosomal subunit.

The protein localises to the plastid. Its subcellular location is the chloroplast. This chain is Small ribosomal subunit protein uS15c (rps15-A), found in Saccharum officinarum (Sugarcane).